A 37-amino-acid chain; its full sequence is Large ribosomal subunit protein bL36c (37 aa).

This sequence belongs to the bacterial ribosomal protein bL36 family.

The protein localises to the plastid. It is found in the chloroplast. The protein is Large ribosomal subunit protein bL36c (rpl36) of Marchantia polymorpha (Common liverwort).